The chain runs to 338 residues: Large ribosomal subunit protein uL3 (338 aa).

Disordered stretches follow at residues 230 to 256 and 315 to 338; these read HRKG…RPGQ and PARP…SQQP.

Belongs to the universal ribosomal protein uL3 family. Part of the 50S ribosomal subunit. Forms a cluster with proteins L14 and L24e.

One of the primary rRNA binding proteins, it binds directly near the 3'-end of the 23S rRNA, where it nucleates assembly of the 50S subunit. The polypeptide is Large ribosomal subunit protein uL3 (Pyrobaculum arsenaticum (strain DSM 13514 / JCM 11321 / PZ6)).